We begin with the raw amino-acid sequence, 543 residues long: Carboxypeptidase Y homolog A (543 aa).

An N-terminal signal peptide occupies residues 1–17 (MKFLTTGLLATAALAAA). The propeptide occupies 18–124 (QEQQVLQAED…KLHNYDLRVK (107 aa)). Intrachain disulfides connect C179-C419, C313-C327, C337-C360, C344-C353, and C382-C389. The N-linked (GlcNAc...) asparagine glycan is linked to N210. Residue S266 is part of the active site. D458 is an active-site residue. N509 carries an N-linked (GlcNAc...) asparagine glycan. The active site involves H520.

The protein belongs to the peptidase S10 family.

The protein localises to the vacuole. It carries out the reaction Release of a C-terminal amino acid with broad specificity.. Functionally, vacuolar carboxypeptidase involved in degradation of small peptides. Digests preferentially peptides containing an aliphatic or hydrophobic residue in P1' position, as well as methionine, leucine or phenylalanine in P1 position of ester substrate. This is Carboxypeptidase Y homolog A (CPYA) from Trichophyton tonsurans (Scalp ringworm fungus).